A 161-amino-acid chain; its full sequence is Cytochrome c-type biogenesis protein CcmE (161 aa).

Topologically, residues 1 to 13 (MSWLPKSPKARRR) are cytoplasmic. The chain crosses the membrane as a helical; Signal-anchor for type II membrane protein span at residues 14-34 (LMLVAAIAPVLAVAAGLTLWG). Residues 35–161 (LSDSISFFYT…QRPEHQGDAL (127 aa)) are Periplasmic-facing. Residues His-128 and Tyr-132 each contribute to the heme site.

It belongs to the CcmE/CycJ family.

It is found in the cell inner membrane. Functionally, heme chaperone required for the biogenesis of c-type cytochromes. Transiently binds heme delivered by CcmC and transfers the heme to apo-cytochromes in a process facilitated by CcmF and CcmH. In Phenylobacterium zucineum (strain HLK1), this protein is Cytochrome c-type biogenesis protein CcmE.